The sequence spans 140 residues: MKRKHKRLLFVLASFCAAGCALLFILSELRESVSFFYTTSELLSGPQRESNLPVRVGGMVVKGSIARSTDSISFDLTDFKTELNVVYSGMLPPLFGEGVGAVVKGRLLHGKFVADEVLAKHDEKYMPKKYTIPKALPEPK.

The Cytoplasmic portion of the chain corresponds to 1–7 (MKRKHKR). A helical; Signal-anchor for type II membrane protein membrane pass occupies residues 8 to 28 (LLFVLASFCAAGCALLFILSE). Over 29–140 (LRESVSFFYT…TIPKALPEPK (112 aa)) the chain is Periplasmic. His-121 and Tyr-125 together coordinate heme.

This sequence belongs to the CcmE/CycJ family.

The protein localises to the cell inner membrane. Heme chaperone required for the biogenesis of c-type cytochromes. Transiently binds heme delivered by CcmC and transfers the heme to apo-cytochromes in a process facilitated by CcmF and CcmH. This is Cytochrome c-type biogenesis protein CcmE from Anaplasma marginale (strain Florida).